The following is a 165-amino-acid chain: Putative L,D-transpeptidase YkuD (165 aa).

The region spanning 2-46 (LMYQVKPGETLESIAADFRTTRQALLQANPGLNGGQVSAGQSIII) is the LysM domain. The region spanning 57-164 (YRIAVSLNGR…VPNGTRVSIT (108 aa)) is the L,D-TPase catalytic domain. The active-site Proton donor/acceptor is H124. Catalysis depends on C140, which acts as the Nucleophile.

This sequence belongs to the YkuD family. Monomer.

It is found in the spore wall. Its pathway is cell wall biogenesis; peptidoglycan biosynthesis. In terms of biological role, probable enzyme that may play an important role in cell wall biology. In Bacillus licheniformis (strain ATCC 14580 / DSM 13 / JCM 2505 / CCUG 7422 / NBRC 12200 / NCIMB 9375 / NCTC 10341 / NRRL NRS-1264 / Gibson 46), this protein is Putative L,D-transpeptidase YkuD.